The sequence spans 272 residues: Phosphatidylglycerol--prolipoprotein diacylglyceryl transferase (272 aa).

Transmembrane regions (helical) follow at residues 16–36 (VGLH…LSSF), 62–82 (FALG…VLFY), 97–117 (IWKG…WAAV), and 129–149 (LSVT…ALLI). R150 serves as a coordination point for a 1,2-diacyl-sn-glycero-3-phospho-(1'-sn-glycerol). Helical transmembrane passes span 206 to 226 (GVIR…VAVI) and 246 to 266 (ILTI…GIIW).

This sequence belongs to the Lgt family.

The protein resides in the cell inner membrane. The enzyme catalyses L-cysteinyl-[prolipoprotein] + a 1,2-diacyl-sn-glycero-3-phospho-(1'-sn-glycerol) = an S-1,2-diacyl-sn-glyceryl-L-cysteinyl-[prolipoprotein] + sn-glycerol 1-phosphate + H(+). It participates in protein modification; lipoprotein biosynthesis (diacylglyceryl transfer). Its function is as follows. Catalyzes the transfer of the diacylglyceryl group from phosphatidylglycerol to the sulfhydryl group of the N-terminal cysteine of a prolipoprotein, the first step in the formation of mature lipoproteins. This Chlamydia trachomatis serovar D (strain ATCC VR-885 / DSM 19411 / UW-3/Cx) protein is Phosphatidylglycerol--prolipoprotein diacylglyceryl transferase.